The sequence spans 241 residues: Protocatechuate 3,4-dioxygenase beta chain (241 aa).

Fe cation is bound by residues tyrosine 109, tyrosine 148, histidine 161, and histidine 163.

Belongs to the intradiol ring-cleavage dioxygenase family. The enzyme is an oligomer of 12 copies of the alpha and beta chains. It depends on Fe(3+) as a cofactor.

It carries out the reaction 3,4-dihydroxybenzoate + O2 = 3-carboxy-cis,cis-muconate + 2 H(+). Its pathway is aromatic compound metabolism; beta-ketoadipate pathway; 3-carboxy-cis,cis-muconate from 3,4-dihydroxybenzoate: step 1/1. In terms of biological role, plays an essential role in the utilization of numerous aromatic and hydroaromatic compounds via the beta-ketoadipate pathway. In Acinetobacter baylyi (strain ATCC 33305 / BD413 / ADP1), this protein is Protocatechuate 3,4-dioxygenase beta chain (pcaH).